A 58-amino-acid chain; its full sequence is UPF0391 membrane protein Bxeno_A2959 (58 aa).

The next 2 membrane-spanning stretches (helical) occupy residues 4–24 (WALFFAVVAVIAGVLGFTGVA) and 33–53 (FLFIVFVILCVVFLVLGFVVT).

It belongs to the UPF0391 family.

The protein localises to the cell membrane. In Paraburkholderia xenovorans (strain LB400), this protein is UPF0391 membrane protein Bxeno_A2959.